Reading from the N-terminus, the 504-residue chain is uncharacterized protein (504 aa).

To M.thermoautotrophicum MTH1137.

This is an uncharacterized protein from Methanocaldococcus jannaschii (strain ATCC 43067 / DSM 2661 / JAL-1 / JCM 10045 / NBRC 100440) (Methanococcus jannaschii).